A 305-amino-acid chain; its full sequence is Aspartate carbamoyltransferase catalytic subunit (305 aa).

2 residues coordinate carbamoyl phosphate: arginine 58 and threonine 59. Lysine 86 contacts L-aspartate. Residues arginine 108, histidine 136, and glutamine 139 each contribute to the carbamoyl phosphate site. Arginine 169 and arginine 223 together coordinate L-aspartate. Carbamoyl phosphate contacts are provided by glycine 264 and proline 265.

This sequence belongs to the aspartate/ornithine carbamoyltransferase superfamily. ATCase family. In terms of assembly, heterododecamer (2C3:3R2) of six catalytic PyrB chains organized as two trimers (C3), and six regulatory PyrI chains organized as three dimers (R2).

It catalyses the reaction carbamoyl phosphate + L-aspartate = N-carbamoyl-L-aspartate + phosphate + H(+). It participates in pyrimidine metabolism; UMP biosynthesis via de novo pathway; (S)-dihydroorotate from bicarbonate: step 2/3. In terms of biological role, catalyzes the condensation of carbamoyl phosphate and aspartate to form carbamoyl aspartate and inorganic phosphate, the committed step in the de novo pyrimidine nucleotide biosynthesis pathway. The sequence is that of Aspartate carbamoyltransferase catalytic subunit from Syntrophobacter fumaroxidans (strain DSM 10017 / MPOB).